We begin with the raw amino-acid sequence, 161 residues long: Zinc finger A20 and AN1 domain-containing stress-associated protein 4 (161 aa).

An A20-type zinc finger spans residues 10–44; that stretch reads PEGHRLCVNNCGFFGSSATMNLCSNCYGDLCLKQQ. Zn(2+) contacts are provided by C16, C20, C32, and C35. Residues 76 to 85 are compositionally biased toward basic and acidic residues; the sequence is TTKKTEEKKP. The disordered stretch occupies residues 76-99; sequence TTKKTEEKKPIQIPTEQPSPPQRP. An AN1-type zinc finger spans residues 96-142; the sequence is PQRPNRCTVCRKRVGLTGFMCRCGTTFCGSHRYPEVHGCTFDFKSAG. Zn(2+) contacts are provided by C102, C105, C116, C118, C123, H126, H132, and C134.

Functionally, may be involved in environmental stress response. The protein is Zinc finger A20 and AN1 domain-containing stress-associated protein 4 (SAP4) of Arabidopsis thaliana (Mouse-ear cress).